The sequence spans 257 residues: Hydroxyacylglutathione hydrolase (257 aa).

The Zn(2+) site is built by His-54, His-56, Asp-58, His-59, His-113, Asp-137, and His-175.

It belongs to the metallo-beta-lactamase superfamily. Glyoxalase II family. Monomer. The cofactor is Zn(2+).

It catalyses the reaction an S-(2-hydroxyacyl)glutathione + H2O = a 2-hydroxy carboxylate + glutathione + H(+). Its pathway is secondary metabolite metabolism; methylglyoxal degradation; (R)-lactate from methylglyoxal: step 2/2. Functionally, thiolesterase that catalyzes the hydrolysis of S-D-lactoyl-glutathione to form glutathione and D-lactic acid. In Gloeothece citriformis (strain PCC 7424) (Cyanothece sp. (strain PCC 7424)), this protein is Hydroxyacylglutathione hydrolase.